The sequence spans 116 residues: Staphylococcal complement inhibitor (116 aa).

The first 31 residues, 1 to 31, serve as a signal peptide directing secretion; it reads MKIRKSILAGTLAIVLASPLVTNLDKNEAQA. An essential for activity region spans residues 62–79; sequence LATGSLNTYYKRTIKISG.

Belongs to the SCIN family.

Its subcellular location is the secreted. Functionally, involved in countering the first line of host defense mechanisms. Efficiently inhibits opsonization, phagocytosis and killing of S.aureus by human neutrophils. Acts by binding and stabilizing human C3 convertases (C4b2a and C3bBb), leading to their inactivation. The convertases are no longer able to cleave complement C3, therefore preventing further C3b deposition on the bacterial surface and phagocytosis of the bacterium. Also prevents C5a-induced neutrophil responses. This is Staphylococcal complement inhibitor (scn) from Staphylococcus aureus (strain N315).